An 877-amino-acid polypeptide reads, in one-letter code: Alanine--tRNA ligase (877 aa).

Residues His-565, His-569, Cys-667, and His-671 each contribute to the Zn(2+) site.

Belongs to the class-II aminoacyl-tRNA synthetase family. Zn(2+) serves as cofactor.

The protein resides in the cytoplasm. It carries out the reaction tRNA(Ala) + L-alanine + ATP = L-alanyl-tRNA(Ala) + AMP + diphosphate. Catalyzes the attachment of alanine to tRNA(Ala) in a two-step reaction: alanine is first activated by ATP to form Ala-AMP and then transferred to the acceptor end of tRNA(Ala). Also edits incorrectly charged Ser-tRNA(Ala) and Gly-tRNA(Ala) via its editing domain. The polypeptide is Alanine--tRNA ligase (Chromobacterium violaceum (strain ATCC 12472 / DSM 30191 / JCM 1249 / CCUG 213 / NBRC 12614 / NCIMB 9131 / NCTC 9757 / MK)).